A 78-amino-acid chain; its full sequence is UPF0270 protein YPO0179/y3960/YP_0178 (78 aa).

The protein belongs to the UPF0270 family.

The chain is UPF0270 protein YPO0179/y3960/YP_0178 from Yersinia pestis.